A 188-amino-acid polypeptide reads, in one-letter code: Ras-related protein Rap-1 (188 aa).

10 to 17 serves as a coordination point for GTP; sequence GSGGVGKS. Residues 32-40 carry the Effector region motif; sequence YDPTIEDSY. GTP is bound by residues 57–61 and 116–119; these read DTAGT and NKCD.

Belongs to the small GTPase superfamily. Ras family.

It catalyses the reaction GTP + H2O = GDP + phosphate + H(+). Functionally, required in the hypodermis for proper formation of the cuticle. The chain is Ras-related protein Rap-1 (rap-1) from Caenorhabditis elegans.